The sequence spans 156 residues: Small ribosomal subunit protein uS7 (156 aa).

This sequence belongs to the universal ribosomal protein uS7 family. As to quaternary structure, part of the 30S ribosomal subunit. Contacts proteins S9 and S11.

Functionally, one of the primary rRNA binding proteins, it binds directly to 16S rRNA where it nucleates assembly of the head domain of the 30S subunit. Is located at the subunit interface close to the decoding center, probably blocks exit of the E-site tRNA. This is Small ribosomal subunit protein uS7 from Frankia casuarinae (strain DSM 45818 / CECT 9043 / HFP020203 / CcI3).